A 962-amino-acid chain; its full sequence is Glycine dehydrogenase (decarboxylating) (962 aa).

Lysine 709 is modified (N6-(pyridoxal phosphate)lysine).

Belongs to the GcvP family. As to quaternary structure, the glycine cleavage system is composed of four proteins: P, T, L and H. Requires pyridoxal 5'-phosphate as cofactor.

The enzyme catalyses N(6)-[(R)-lipoyl]-L-lysyl-[glycine-cleavage complex H protein] + glycine + H(+) = N(6)-[(R)-S(8)-aminomethyldihydrolipoyl]-L-lysyl-[glycine-cleavage complex H protein] + CO2. Functionally, the glycine cleavage system catalyzes the degradation of glycine. The P protein binds the alpha-amino group of glycine through its pyridoxal phosphate cofactor; CO(2) is released and the remaining methylamine moiety is then transferred to the lipoamide cofactor of the H protein. In Shewanella baltica (strain OS223), this protein is Glycine dehydrogenase (decarboxylating).